The following is a 195-amino-acid chain: Envelope glycoprotein L (195 aa).

Residues 1–25 (MKIYRVLVHLSFVLGMFTKTNTVLA) form the signal peptide. Residues 28–157 (KYDLVHGFMR…LIAPADISCY (130 aa)) form an interaction with gH region. The region spanning 28 to 195 (KYDLVHGFMR…TTSGSRRANA (168 aa)) is the gL alphaherpesvirus-type domain. Intrachain disulfides connect Cys-49/Cys-78 and Cys-156/Cys-178.

It belongs to the herpesviridae glycoprotein L (gL) family. Alphaherpesvirinae gL subfamily. Interacts with glycoprotein H (gH); this interaction is necessary for the correct processing and cell surface expression of gH. The heterodimer gH/gL seems to interact with gB trimers during fusion.

It localises to the virion membrane. Its subcellular location is the host cell membrane. The protein localises to the host Golgi apparatus. It is found in the host trans-Golgi network. Its function is as follows. The heterodimer glycoprotein H-glycoprotein L is required for the fusion of viral and plasma membranes leading to virus entry into the host cell. Acts as a functional inhibitor of gH and maintains gH in an inhibited form. Upon binding to host integrins, gL dissociates from gH leading to activation of the viral fusion glycoproteins gB and gH. The polypeptide is Envelope glycoprotein L (Gallus gallus (Chicken)).